The sequence spans 317 residues: Cyclin-T1-3 (317 aa).

The protein belongs to the cyclin family. Cyclin T subfamily. Interacts with CDKC-1 and CDKC-2. Abundantly expressed in flowers. Expressed in roots, seedlings, rosettes and stems.

The sequence is that of Cyclin-T1-3 (CYCT1-3) from Arabidopsis thaliana (Mouse-ear cress).